The primary structure comprises 83 residues: Large ribosomal subunit protein bL31 (83 aa).

The protein belongs to the bacterial ribosomal protein bL31 family. Type A subfamily. Part of the 50S ribosomal subunit.

Binds the 23S rRNA. The polypeptide is Large ribosomal subunit protein bL31 (Synechococcus sp. (strain CC9605)).